The primary structure comprises 164 residues: uncharacterized protein (164 aa).

The RDD domain occupies 26-158 (YAGFWVRFWA…DYIADTTVVH (133 aa)). 2 helical membrane passes run 35-55 (AFLLDWLVIWGLNHLLVSPLF) and 66-86 (MFTFSAYSVTTLIVYLAYFAL).

It is found in the cell membrane. This is an uncharacterized protein from Bacillus subtilis (strain 168).